The following is a 334-amino-acid chain: AT-hook motif nuclear-localized protein 2 (334 aa).

A compositionally biased stretch (low complexity) spans 1–21 (METTGEVVKTTTGSDGGVTVV). Disordered stretches follow at residues 1 to 103 (METT…PTTS) and 109 to 128 (STTSEKRGKMKPATPTPSSF). The span at 44–54 (SVAPPPPPPPQ) shows a compositional bias: pro residues. Over residues 71–80 (IKKRRGRPRK) the composition is skewed to basic residues. A Bipartite nuclear localization signal motif is present at residues 72-80 (KKRRGRPRK). The a.T hook DNA-binding region spans 72 to 84 (KKRRGRPRKYGHD). Polar residues predominate over residues 90–103 (LSPNPISSAAPTTS). A PPC domain is found at 147–287 (AANFTPHIIT…PHNHNFMSSP (141 aa)). Over residues 306-319 (SSLPISTWTPSFPS) the composition is skewed to polar residues. Residues 306 to 334 (SSLPISTWTPSFPSDSRHKHSHDFNITLT) are disordered.

The protein resides in the nucleus. Transcription factor that specifically binds AT-rich DNA sequences related to the nuclear matrix attachment regions (MARs). This is AT-hook motif nuclear-localized protein 2 from Arabidopsis thaliana (Mouse-ear cress).